A 1046-amino-acid chain; its full sequence is Toluene efflux pump membrane transporter TtgE (1046 aa).

Transmembrane regions (helical) follow at residues 10–30, 339–359, 370–390, 392–412, 440–460, 470–490, 542–562, 871–891, 895–915, 927–947, 973–993, and 1008–1028; these read IFAW…LTKM, SVVH…FLFL, LAVP…GISI, VLTM…AIVV, GALV…AFFG, FAVT…IFTP, LIFA…PKAF, APML…ALYE, VPMS…LATL, VGLM…IEFA, IIMT…ATGA, and GMIT…VVVV.

Belongs to the resistance-nodulation-cell division (RND) (TC 2.A.6) family.

It is found in the cell inner membrane. In terms of biological role, the inner membrane transporter component of an inducible organic solvent efflux pump. Involved in export of toluene and styrene but not of m-xylene, propylbenzene or ethylbenzene. Is not involved in antibiotic or AMP efflux. The protein is Toluene efflux pump membrane transporter TtgE (ttgE) of Pseudomonas putida (strain DOT-T1E).